Reading from the N-terminus, the 365-residue chain is Cyclin-D5-2 (365 aa).

Belongs to the cyclin family. Cyclin D subfamily.

The polypeptide is Cyclin-D5-2 (CYCD5-2) (Oryza sativa subsp. japonica (Rice)).